Reading from the N-terminus, the 318-residue chain is Lipoyl synthase 1 (318 aa).

The tract at residues 6–32 is disordered; the sequence is DTISNPLRPRHPEKVNRPDSASPPKPD. Residues Cys-60, Cys-65, Cys-71, Cys-86, Cys-90, Cys-93, and Ser-299 each contribute to the [4Fe-4S] cluster site. Positions 72-288 constitute a Radical SAM core domain; the sequence is WDKKHATFMI…EKVAYTKGFL (217 aa).

Belongs to the radical SAM superfamily. Lipoyl synthase family. [4Fe-4S] cluster is required as a cofactor.

It localises to the cytoplasm. The enzyme catalyses [[Fe-S] cluster scaffold protein carrying a second [4Fe-4S](2+) cluster] + N(6)-octanoyl-L-lysyl-[protein] + 2 oxidized [2Fe-2S]-[ferredoxin] + 2 S-adenosyl-L-methionine + 4 H(+) = [[Fe-S] cluster scaffold protein] + N(6)-[(R)-dihydrolipoyl]-L-lysyl-[protein] + 4 Fe(3+) + 2 hydrogen sulfide + 2 5'-deoxyadenosine + 2 L-methionine + 2 reduced [2Fe-2S]-[ferredoxin]. Its pathway is protein modification; protein lipoylation via endogenous pathway; protein N(6)-(lipoyl)lysine from octanoyl-[acyl-carrier-protein]: step 2/2. Catalyzes the radical-mediated insertion of two sulfur atoms into the C-6 and C-8 positions of the octanoyl moiety bound to the lipoyl domains of lipoate-dependent enzymes, thereby converting the octanoylated domains into lipoylated derivatives. This is Lipoyl synthase 1 from Bradyrhizobium diazoefficiens (strain JCM 10833 / BCRC 13528 / IAM 13628 / NBRC 14792 / USDA 110).